The following is a 116-amino-acid chain: Large ribosomal subunit protein uL18 (116 aa).

The protein belongs to the universal ribosomal protein uL18 family. In terms of assembly, part of the 50S ribosomal subunit; part of the 5S rRNA/L5/L18/L25 subcomplex. Contacts the 5S and 23S rRNAs.

This is one of the proteins that bind and probably mediate the attachment of the 5S RNA into the large ribosomal subunit, where it forms part of the central protuberance. This Shewanella loihica (strain ATCC BAA-1088 / PV-4) protein is Large ribosomal subunit protein uL18.